We begin with the raw amino-acid sequence, 361 residues long: Phenylalanine--tRNA ligase alpha subunit (361 aa).

E260 contributes to the Mg(2+) binding site.

It belongs to the class-II aminoacyl-tRNA synthetase family. Phe-tRNA synthetase alpha subunit type 1 subfamily. In terms of assembly, tetramer of two alpha and two beta subunits. The cofactor is Mg(2+).

The protein localises to the cytoplasm. It catalyses the reaction tRNA(Phe) + L-phenylalanine + ATP = L-phenylalanyl-tRNA(Phe) + AMP + diphosphate + H(+). This Bartonella henselae (strain ATCC 49882 / DSM 28221 / CCUG 30454 / Houston 1) (Rochalimaea henselae) protein is Phenylalanine--tRNA ligase alpha subunit.